The following is a 607-amino-acid chain: Glutamine--fructose-6-phosphate aminotransferase [isomerizing] (607 aa).

C2 functions as the Nucleophile; for GATase activity in the catalytic mechanism. The Glutamine amidotransferase type-2 domain maps to C2–E217. SIS domains follow at residues T277–S422 and I455–P597. Residue K602 is the For Fru-6P isomerization activity of the active site.

As to quaternary structure, homodimer.

Its subcellular location is the cytoplasm. The enzyme catalyses D-fructose 6-phosphate + L-glutamine = D-glucosamine 6-phosphate + L-glutamate. Its function is as follows. Catalyzes the first step in hexosamine metabolism, converting fructose-6P into glucosamine-6P using glutamine as a nitrogen source. This is Glutamine--fructose-6-phosphate aminotransferase [isomerizing] from Bartonella quintana (strain Toulouse) (Rochalimaea quintana).